A 297-amino-acid polypeptide reads, in one-letter code: Acetaldehyde dehydrogenase (297 aa).

NAD(+) is bound at residue 15-18; it reads SGSI. The Acyl-thioester intermediate role is filled by Cys130. NAD(+)-binding positions include 162–170 and Asn272; that span reads SAGIATREN.

Belongs to the acetaldehyde dehydrogenase family.

It carries out the reaction acetaldehyde + NAD(+) + CoA = acetyl-CoA + NADH + H(+). This is Acetaldehyde dehydrogenase (mhpF) from Burkholderia thailandensis (strain ATCC 700388 / DSM 13276 / CCUG 48851 / CIP 106301 / E264).